A 283-amino-acid chain; its full sequence is S-methyl-5'-thioadenosine phosphorylase (283 aa).

T18 contacts phosphate. K51 carries the post-translational modification N6-acetyllysine. Phosphate contacts are provided by residues 60 to 61 (RH) and 93 to 94 (TA). Residue M196 coordinates substrate. T197 provides a ligand contact to phosphate. 220 to 222 (DYD) provides a ligand contact to substrate.

The protein belongs to the PNP/MTAP phosphorylase family. MTAP subfamily. In terms of assembly, homotrimer.

The protein localises to the cytoplasm. It localises to the nucleus. The enzyme catalyses S-methyl-5'-thioadenosine + phosphate = 5-(methylsulfanyl)-alpha-D-ribose 1-phosphate + adenine. The protein operates within amino-acid biosynthesis; L-methionine biosynthesis via salvage pathway; S-methyl-5-thio-alpha-D-ribose 1-phosphate from S-methyl-5'-thioadenosine (phosphorylase route): step 1/1. Its function is as follows. Catalyzes the reversible phosphorylation of S-methyl-5'-thioadenosine (MTA) to adenine and 5-methylthioribose-1-phosphate. Involved in the breakdown of MTA, a major by-product of polyamine biosynthesis. Responsible for the first step in the methionine salvage pathway after MTA has been generated from S-adenosylmethionine. Has broad substrate specificity with 6-aminopurine nucleosides as preferred substrates. In Bos taurus (Bovine), this protein is S-methyl-5'-thioadenosine phosphorylase.